The following is a 318-amino-acid chain: Protein FAM228A (318 aa).

Residues 259 to 297 are disordered; the sequence is SQESKRHEKKGLALGTGQHRPRSWAAGEGQQRRRSQPVD.

This sequence belongs to the FAM228 family.

The polypeptide is Protein FAM228A (FAM228A) (Bos taurus (Bovine)).